We begin with the raw amino-acid sequence, 335 residues long: Biotin synthase (335 aa).

Residues 51 to 278 form the Radical SAM core domain; it reads NTVQLSSLLS…LAKVRLSAGR (228 aa). Positions 66, 70, and 73 each coordinate [4Fe-4S] cluster. 4 residues coordinate [2Fe-2S] cluster: cysteine 110, cysteine 141, cysteine 201, and arginine 273.

It belongs to the radical SAM superfamily. Biotin synthase family. As to quaternary structure, homodimer. [4Fe-4S] cluster serves as cofactor. Requires [2Fe-2S] cluster as cofactor.

It catalyses the reaction (4R,5S)-dethiobiotin + (sulfur carrier)-SH + 2 reduced [2Fe-2S]-[ferredoxin] + 2 S-adenosyl-L-methionine = (sulfur carrier)-H + biotin + 2 5'-deoxyadenosine + 2 L-methionine + 2 oxidized [2Fe-2S]-[ferredoxin]. It participates in cofactor biosynthesis; biotin biosynthesis; biotin from 7,8-diaminononanoate: step 2/2. Its function is as follows. Catalyzes the conversion of dethiobiotin (DTB) to biotin by the insertion of a sulfur atom into dethiobiotin via a radical-based mechanism. This chain is Biotin synthase, found in Bordetella pertussis (strain Tohama I / ATCC BAA-589 / NCTC 13251).